A 360-amino-acid polypeptide reads, in one-letter code: uncharacterized protein (360 aa).

Solcar repeat units lie at residues 34–153, 172–256, and 266–355; these read VGVL…LSVW, PDWS…FKTN, and NPFV…FKFL. 6 consecutive transmembrane segments (helical) span residues 40 to 60, 125 to 145, 178 to 198, 225 to 247, 269 to 289, and 327 to 348; these read VSAS…LDVV, LWSG…FYFT, AVAG…IEMI, ISSF…GIYW, VVSF…THPF, and FSSG…MISF.

This sequence belongs to the mitochondrial carrier (TC 2.A.29) family.

The protein resides in the mitochondrion inner membrane. This is an uncharacterized protein from Caenorhabditis elegans.